A 590-amino-acid polypeptide reads, in one-letter code: Fucose-1-phosphate guanylyltransferase (590 aa).

As to expression, expressed at highest levels in brain, moderately in testis, ovary and kidney, and weakly in liver, spleen, heart and lung.

The protein localises to the cytoplasm. The catalysed reaction is beta-L-fucose 1-phosphate + GTP + H(+) = GDP-beta-L-fucose + diphosphate. Its function is as follows. Catalyzes the formation of GDP-L-fucose from GTP and L-fucose-1-phosphate. Functions as a salvage pathway to reutilize L-fucose arising from the turnover of glycoproteins and glycolipids. The sequence is that of Fucose-1-phosphate guanylyltransferase from Mus musculus (Mouse).